The sequence spans 347 residues: DNA-directed RNA polymerase subunit alpha (347 aa).

Residues 1-243 (MLFREGTRLI…DQISVFINFD (243 aa)) are alpha N-terminal domain (alpha-NTD). The interval 255–347 (SGSSDLNDNL…EWKRKQHHEA (93 aa)) is alpha C-terminal domain (alpha-CTD).

This sequence belongs to the RNA polymerase alpha chain family. Homodimer. The RNAP catalytic core consists of 2 alpha, 1 beta, 1 beta' and 1 omega subunit. When a sigma factor is associated with the core the holoenzyme is formed, which can initiate transcription.

The enzyme catalyses RNA(n) + a ribonucleoside 5'-triphosphate = RNA(n+1) + diphosphate. In terms of biological role, DNA-dependent RNA polymerase catalyzes the transcription of DNA into RNA using the four ribonucleoside triphosphates as substrates. This is DNA-directed RNA polymerase subunit alpha from Lawsonia intracellularis (strain PHE/MN1-00).